The sequence spans 417 residues: Methylthioribose-1-phosphate isomerase (417 aa).

Residue Asp-285 is the Proton donor of the active site.

Belongs to the eIF-2B alpha/beta/delta subunits family. MtnA subfamily.

The protein resides in the cytoplasm. It is found in the nucleus. The enzyme catalyses 5-(methylsulfanyl)-alpha-D-ribose 1-phosphate = 5-(methylsulfanyl)-D-ribulose 1-phosphate. Its pathway is amino-acid biosynthesis; L-methionine biosynthesis via salvage pathway; L-methionine from S-methyl-5-thio-alpha-D-ribose 1-phosphate: step 1/6. Catalyzes the interconversion of methylthioribose-1-phosphate (MTR-1-P) into methylthioribulose-1-phosphate (MTRu-1-P). The protein is Methylthioribose-1-phosphate isomerase of Lachancea thermotolerans (strain ATCC 56472 / CBS 6340 / NRRL Y-8284) (Yeast).